The following is a 383-amino-acid chain: tRNA-specific 2-thiouridylase MnmA (383 aa).

ATP is bound by residues 6–13 (AMSGGVDS) and L32. C101 acts as the Nucleophile in catalysis. The cysteines at positions 101 and 199 are disulfide-linked. G125 lines the ATP pocket. Residues 148–150 (KDQ) are interaction with tRNA. C199 acts as the Cysteine persulfide intermediate in catalysis.

Belongs to the MnmA/TRMU family.

The protein localises to the cytoplasm. The enzyme catalyses S-sulfanyl-L-cysteinyl-[protein] + uridine(34) in tRNA + AH2 + ATP = 2-thiouridine(34) in tRNA + L-cysteinyl-[protein] + A + AMP + diphosphate + H(+). Its function is as follows. Catalyzes the 2-thiolation of uridine at the wobble position (U34) of tRNA, leading to the formation of s(2)U34. In Kocuria rhizophila (strain ATCC 9341 / DSM 348 / NBRC 103217 / DC2201), this protein is tRNA-specific 2-thiouridylase MnmA.